A 613-amino-acid polypeptide reads, in one-letter code: Apoptosis-inducing factor 1, mitochondrial (613 aa).

2 consecutive short sequence motifs (mitochondrial localization signal) follow at residues 1–31 (MFRC…PRQR) and 63–89 (KIDN…KTMK). Residues 1–54 (MFRCGGLAAGALKQKLVPLVRTVCVRSPRQRNRLPGNLFQRWHVPLELQMTRQM) constitute a mitochondrion transit peptide. Positions 55–101 (ASSGASGGKIDNSVLVLIVGLSTVGAGAYAYKTMKEDEKRYNERISG) are cleaved as a propeptide — removed in mature form. The disordered stretch occupies residues 100–127 (SGLGLTPEQKQKKAALSASEGEEVPQDK). Thr105 bears the Phosphothreonine mark. Lys109 is subject to N6-succinyllysine. Residues Ser116 and Ser118 each carry the phosphoserine modification. The segment at 134–483 (FLLIGGGTAA…KPYWHQSMFW (350 aa)) is FAD-dependent oxidoreductase. FAD contacts are provided by residues 138–142 (GGGTA), 164–165 (ED), Arg172, and Lys177. Trp196 lines the NAD(+) pocket. Val233 is a binding site for FAD. Lys255 participates in a covalent cross-link: Glycyl lysine isopeptide (Lys-Gly) (interchain with G-Cter in ubiquitin). Ser268 carries the phosphoserine modification. Arg285 serves as a coordination point for FAD. A Phosphoserine modification is found at Ser292. NAD(+) contacts are provided by residues 308-311 (GGFL), Glu336, and Lys342. A Phosphoserine modification is found at Ser371. Residue Lys388 is modified to N6-acetyllysine. Gly399 serves as a coordination point for NAD(+). FAD is bound at residue Asp438. Positions 446 to 451 (KLGRRR) match the Nuclear localization signal motif. NAD(+) contacts are provided by residues 453–454 (EH), Trp483, and Glu493. FAD-binding positions include 454 to 455 (HH) and Trp483. Residues 513–529 (AQDNPKSATEQSGTGIR) are compositionally biased toward polar residues. Positions 513-554 (AQDNPKSATEQSGTGIRSESETESEASEITIPPSTPAVPQAP) are disordered. The residue at position 521 (Thr521) is a Phosphothreonine. 2 positions are modified to phosphoserine: Ser524 and Ser530. Residue Asn583 participates in NAD(+) binding. N6-acetyllysine is present on Lys593.

The protein belongs to the FAD-dependent oxidoreductase family. Monomer (oxidized form). Homodimer (reduced form). Upon reduction with NADH, undergoes dimerization and forms tight, long-lived FADH2-NAD charge transfer complexes (CTC) resistant to oxidation. Also dimerizes with isoform 3 preventing its release from mitochondria. Interacts with XIAP/BIRC4. Interacts (via N-terminus) with EIF3G (via C-terminus). Interacts with PRELID1. Interacts with CHCHD4; the interaction increases in presence of NADH. Interacts with processed form of PARP1 (Poly [ADP-ribose] polymerase 1, processed C-terminus); interaction is mediated with poly-ADP-ribose chains attached to PARP1, promoting translocation into the nucleus. FAD is required as a cofactor. Under normal conditions, a 54-residue N-terminal segment is first proteolytically removed during or just after translocation into the mitochondrial intermembrane space (IMS) by the mitochondrial processing peptidase (MPP) to form the inner-membrane-anchored mature form (AIFmit). During apoptosis, it is further proteolytically processed at amino-acid position 101 leading to the generation of the mature form, which is confined to the mitochondrial IMS in a soluble form (AIFsol). AIFsol is released to the cytoplasm in response to specific death signals, and translocated to the nucleus, where it induces nuclear apoptosis in a caspase-independent manner. Post-translationally, ubiquitination by XIAP/BIRC4 does not lead to proteasomal degradation. Ubiquitination at Lys-255 by XIAP/BIRC4 blocks its ability to bind DNA and induce chromatin degradation, thereby inhibiting its ability to induce cell death. In terms of tissue distribution, expressed in all tested tissues. Detected in muscle and skin fibroblasts (at protein level). Expressed in osteoblasts (at protein level). Brain specific. As to expression, expressed in all tested tissues except brain. In terms of tissue distribution, isoform 5 is frequently down-regulated in human cancers.

The protein localises to the mitochondrion intermembrane space. Its subcellular location is the mitochondrion inner membrane. The protein resides in the cytoplasm. It localises to the nucleus. It is found in the perinuclear region. The protein localises to the mitochondrion. Its subcellular location is the cytosol. The enzyme catalyses A + NADH + H(+) = AH2 + NAD(+). Functions both as NADH oxidoreductase and as regulator of apoptosis. In response to apoptotic stimuli, it is released from the mitochondrion intermembrane space into the cytosol and to the nucleus, where it functions as a proapoptotic factor in a caspase-independent pathway. Release into the cytoplasm is mediated upon binding to poly-ADP-ribose chains. The soluble form (AIFsol) found in the nucleus induces 'parthanatos' i.e. caspase-independent fragmentation of chromosomal DNA. Binds to DNA in a sequence-independent manner. Interacts with EIF3G, and thereby inhibits the EIF3 machinery and protein synthesis, and activates caspase-7 to amplify apoptosis. Plays a critical role in caspase-independent, pyknotic cell death in hydrogen peroxide-exposed cells. In contrast, participates in normal mitochondrial metabolism. Plays an important role in the regulation of respiratory chain biogenesis by interacting with CHCHD4 and controlling CHCHD4 mitochondrial import. Its function is as follows. Has NADH oxidoreductase activity. Does not induce nuclear apoptosis. In terms of biological role, pro-apoptotic isoform. In Homo sapiens (Human), this protein is Apoptosis-inducing factor 1, mitochondrial.